The primary structure comprises 404 residues: Cysteine desulfurase IscS (404 aa).

Pyridoxal 5'-phosphate contacts are provided by residues 75–76, Asn-155, Gln-183, and 203–205; these read AT and SAH. Lys-206 is modified (N6-(pyridoxal phosphate)lysine). Residue Thr-243 coordinates pyridoxal 5'-phosphate. Cys-328 (cysteine persulfide intermediate) is an active-site residue. Cys-328 lines the [2Fe-2S] cluster pocket.

This sequence belongs to the class-V pyridoxal-phosphate-dependent aminotransferase family. NifS/IscS subfamily. Homodimer. Forms a heterotetramer with IscU, interacts with other sulfur acceptors. Pyridoxal 5'-phosphate serves as cofactor.

The protein resides in the cytoplasm. It catalyses the reaction (sulfur carrier)-H + L-cysteine = (sulfur carrier)-SH + L-alanine. Its pathway is cofactor biosynthesis; iron-sulfur cluster biosynthesis. In terms of biological role, master enzyme that delivers sulfur to a number of partners involved in Fe-S cluster assembly, tRNA modification or cofactor biosynthesis. Catalyzes the removal of elemental sulfur atoms from cysteine to produce alanine. Functions as a sulfur delivery protein for Fe-S cluster synthesis onto IscU, an Fe-S scaffold assembly protein, as well as other S acceptor proteins. This is Cysteine desulfurase IscS from Vesicomyosocius okutanii subsp. Calyptogena okutanii (strain HA).